Here is a 432-residue protein sequence, read N- to C-terminus: 3-phosphoshikimate 1-carboxyvinyltransferase (432 aa).

3-phosphoshikimate contacts are provided by Lys-25, Ser-26, and Arg-30. Lys-25 lines the phosphoenolpyruvate pocket. Gly-97 and Arg-125 together coordinate phosphoenolpyruvate. Positions 170, 172, 318, and 345 each coordinate 3-phosphoshikimate. Residue Gln-172 participates in phosphoenolpyruvate binding. Asp-318 acts as the Proton acceptor in catalysis. Residues Arg-349 and Arg-393 each contribute to the phosphoenolpyruvate site.

The protein belongs to the EPSP synthase family. As to quaternary structure, monomer.

The protein localises to the cytoplasm. The enzyme catalyses 3-phosphoshikimate + phosphoenolpyruvate = 5-O-(1-carboxyvinyl)-3-phosphoshikimate + phosphate. It participates in metabolic intermediate biosynthesis; chorismate biosynthesis; chorismate from D-erythrose 4-phosphate and phosphoenolpyruvate: step 6/7. Functionally, catalyzes the transfer of the enolpyruvyl moiety of phosphoenolpyruvate (PEP) to the 5-hydroxyl of shikimate-3-phosphate (S3P) to produce enolpyruvyl shikimate-3-phosphate and inorganic phosphate. The polypeptide is 3-phosphoshikimate 1-carboxyvinyltransferase (Geobacillus thermodenitrificans (strain NG80-2)).